The sequence spans 351 residues: sn-glycerol-3-phosphate import ATP-binding protein UgpC (351 aa).

Residues 4–234 (ITLKDLVKSY…PATLFVAGFI (231 aa)) enclose the ABC transporter domain. 36 to 43 (GPSGCGKS) contacts ATP.

The protein belongs to the ABC transporter superfamily. sn-glycerol-3-phosphate importer (TC 3.A.1.1.3) family. As to quaternary structure, the complex is composed of two ATP-binding proteins (UgpC), two transmembrane proteins (UgpA and UgpE) and a solute-binding protein (UgpB).

It is found in the cell inner membrane. The enzyme catalyses sn-glycerol 3-phosphate(out) + ATP + H2O = sn-glycerol 3-phosphate(in) + ADP + phosphate + H(+). In terms of biological role, part of the ABC transporter complex UgpBAEC involved in sn-glycerol-3-phosphate (G3P) import. Responsible for energy coupling to the transport system. The protein is sn-glycerol-3-phosphate import ATP-binding protein UgpC of Ruegeria sp. (strain TM1040) (Silicibacter sp.).